We begin with the raw amino-acid sequence, 78 residues long: Acyl carrier protein (78 aa).

Residues 2–77 form the Carrier domain; the sequence is STIEERVKKI…AAIDYVKAHQ (76 aa). S37 bears the O-(pantetheine 4'-phosphoryl)serine mark.

It belongs to the acyl carrier protein (ACP) family. Post-translationally, 4'-phosphopantetheine is transferred from CoA to a specific serine of apo-ACP by AcpS. This modification is essential for activity because fatty acids are bound in thioester linkage to the sulfhydryl of the prosthetic group.

The protein resides in the cytoplasm. It functions in the pathway lipid metabolism; fatty acid biosynthesis. Functionally, carrier of the growing fatty acid chain in fatty acid biosynthesis. This is Acyl carrier protein from Pseudomonas putida (strain ATCC 700007 / DSM 6899 / JCM 31910 / BCRC 17059 / LMG 24140 / F1).